Consider the following 639-residue polypeptide: 3-oxocholoyl-CoA 4-desaturase (639 aa).

Gln101 is an FMN binding site. Substrate is bound at residue 155-158 (HAAH). The active-site Proton donor is the Tyr160. FMN-binding positions include Arg208, Arg286, and 308-309 (GR). [4Fe-4S] cluster-binding residues include Cys332 and Cys335. Gln337 contacts FAD. Cys339 and Cys353 together coordinate [4Fe-4S] cluster. Ala383, Glu402, Gln410, Lys420, and Val447 together coordinate FAD.

It in the N-terminal section; belongs to the NADH:flavin oxidoreductase/NADH oxidase family. The cofactor is FMN. Requires FAD as cofactor. [4Fe-4S] cluster serves as cofactor.

The catalysed reaction is 7alpha,12alpha-dihydroxy-3-oxochol-24-oyl-CoA + NAD(+) = 7alpha,12alpha-dihydroxy-3-oxochol-4-en-24-oyl-CoA + NADH + H(+). The enzyme catalyses 7alpha-hydroxy-3-oxochol-24-oyl-CoA + NAD(+) = 7alpha-hydroxy-3-oxochol-4-en-24-oyl-CoA + NADH + H(+). It participates in lipid metabolism; bile acid degradation. Functionally, stereo-specific NAD(H)-dependent 3-oxo-delta4-cholenoic acid oxidoreductase involved in bile acid 7alpha-dehydroxylation. The chain is 3-oxocholoyl-CoA 4-desaturase from Clostridium scindens (strain JCM 10418 / VPI 12708).